The primary structure comprises 551 residues: TRAF3-interacting JNK-activating modulator (551 aa).

The Cytoplasmic segment spans residues 1–526 (MISPDPRPSP…QLPPRRQCGR (526 aa)). Disordered stretches follow at residues 73 to 95 (LEEK…RPGQ) and 140 to 178 (DHLS…IKND). 2 coiled-coil regions span residues 240-436 (DKLK…LLTK) and 464-506 (WDLR…RKLQ). The chain crosses the membrane as a helical; Anchor for type IV membrane protein span at residues 527-544 (WLPVLMVVIAAALAVFLA). Topologically, residues 545-551 (NKDNLMI) are extracellular.

In terms of assembly, interacts (via its coiled-coil domain) with TRAF3 (via isoleucine zipper). Interacts with MAP2K1. Interacts with PPP2CA; this interaction targets PPP2CA to the lysosomes. Interacts with TLR4. Interacts with MAVS. Interacts with TBK1.

It is found in the cell membrane. The protein resides in the golgi apparatus membrane. It localises to the lysosome membrane. Its subcellular location is the mitochondrion outer membrane. Adapter protein that plays essential roles in both innate and adaptive immunity. Plays a crucial role in the regulation of thymocyte development. Mechanistically, mediates TCR-stimulated activation through recruiting MAP2K1/MEK1 to the Golgi and, thereby, facilitating the interaction of MAP2K1/MEK1 with its activator BRAF. Also plays an essential role in regulatory T-cell stability and function by recruiting the serine-threonine phosphatase catalytic subunit (PPP2CA) to the lysosome, thereby facilitating the interaction of PP2Ac with the mTORC1 component RPTOR and restricting glycolytic metabolism. Positively regulates TLR4 signaling activity in macrophage-mediated inflammation by acting as a molecular clamp to facilitate LPS-induced translocation of TLR4 to lipid rafts. In response to viral infection, facilitates the recruitment of TRAF3 to MAVS within mitochondria leading to IRF3 activation and interferon production. However, participates in the maintenance of immune homeostasis and the prevention of overzealous innate immunity by promoting 'Lys-48'-dependent ubiquitination of TBK1. This is TRAF3-interacting JNK-activating modulator (TRAF3IP3) from Homo sapiens (Human).